Reading from the N-terminus, the 181-residue chain is Large ribosomal subunit protein uL5 (181 aa).

It belongs to the universal ribosomal protein uL5 family. Part of the 50S ribosomal subunit; part of the 5S rRNA/L5/L18/L25 subcomplex. Contacts the 5S rRNA and the P site tRNA. Forms a bridge to the 30S subunit in the 70S ribosome.

Its function is as follows. This is one of the proteins that bind and probably mediate the attachment of the 5S RNA into the large ribosomal subunit, where it forms part of the central protuberance. In the 70S ribosome it contacts protein S13 of the 30S subunit (bridge B1b), connecting the 2 subunits; this bridge is implicated in subunit movement. Contacts the P site tRNA; the 5S rRNA and some of its associated proteins might help stabilize positioning of ribosome-bound tRNAs. This chain is Large ribosomal subunit protein uL5, found in Sulfurovum sp. (strain NBC37-1).